We begin with the raw amino-acid sequence, 343 residues long: Glycerol-3-phosphate dehydrogenase [NAD(P)+] (343 aa).

The NADPH site is built by S11, W12, H32, R33, and K106. 3 residues coordinate sn-glycerol 3-phosphate: K106, G136, and S138. A140 contributes to the NADPH binding site. Residues K192, D245, S255, R256, and N257 each coordinate sn-glycerol 3-phosphate. K192 acts as the Proton acceptor in catalysis. R256 provides a ligand contact to NADPH. Residues V280 and E282 each coordinate NADPH.

Belongs to the NAD-dependent glycerol-3-phosphate dehydrogenase family.

The protein resides in the cytoplasm. It catalyses the reaction sn-glycerol 3-phosphate + NAD(+) = dihydroxyacetone phosphate + NADH + H(+). It carries out the reaction sn-glycerol 3-phosphate + NADP(+) = dihydroxyacetone phosphate + NADPH + H(+). It functions in the pathway membrane lipid metabolism; glycerophospholipid metabolism. Its function is as follows. Catalyzes the reduction of the glycolytic intermediate dihydroxyacetone phosphate (DHAP) to sn-glycerol 3-phosphate (G3P), the key precursor for phospholipid synthesis. The protein is Glycerol-3-phosphate dehydrogenase [NAD(P)+] of Geobacillus thermodenitrificans (strain NG80-2).